We begin with the raw amino-acid sequence, 238 residues long: Large ribosomal subunit protein uL5c (238 aa).

The protein belongs to the universal ribosomal protein uL5 family. As to quaternary structure, part of the 50S ribosomal subunit; contacts the 5S rRNA.

The protein localises to the plastid. Its subcellular location is the chloroplast. Its function is as follows. Binds 5S rRNA, forms part of the central protuberance of the 50S subunit. The chain is Large ribosomal subunit protein uL5c (rpl5) from Thalassiosira pseudonana (Marine diatom).